The following is a 1342-amino-acid chain: DNA-directed RNA polymerase subunit beta (1342 aa).

This sequence belongs to the RNA polymerase beta chain family. As to quaternary structure, the RNAP catalytic core consists of 2 alpha, 1 beta, 1 beta' and 1 omega subunit. When a sigma factor is associated with the core the holoenzyme is formed, which can initiate transcription.

It catalyses the reaction RNA(n) + a ribonucleoside 5'-triphosphate = RNA(n+1) + diphosphate. In terms of biological role, DNA-dependent RNA polymerase catalyzes the transcription of DNA into RNA using the four ribonucleoside triphosphates as substrates. The protein is DNA-directed RNA polymerase subunit beta of Proteus mirabilis (strain HI4320).